The primary structure comprises 375 residues: Alanine racemase (375 aa).

K40 acts as the Proton acceptor; specific for D-alanine in catalysis. K40 is modified (N6-(pyridoxal phosphate)lysine). Position 140 (R140) interacts with substrate. The active-site Proton acceptor; specific for L-alanine is the Y268. Residue M315 coordinates substrate.

This sequence belongs to the alanine racemase family. Pyridoxal 5'-phosphate serves as cofactor.

The enzyme catalyses L-alanine = D-alanine. It participates in amino-acid biosynthesis; D-alanine biosynthesis; D-alanine from L-alanine: step 1/1. Functionally, catalyzes the interconversion of L-alanine and D-alanine. May also act on other amino acids. The protein is Alanine racemase (alr) of Limosilactobacillus reuteri (strain DSM 20016) (Lactobacillus reuteri).